A 1004-amino-acid chain; its full sequence is Glutamate [NMDA] receptor subunit 1 (1004 aa).

Positions 1–39 (MAGTDSPAAARFVYRCLLFAPAIVVGLLLPLTLPPIAAA) are cleaved as a signal peptide. Over 40 to 585 (QRHTASDNPS…TLVSFLQPFS (546 aa)) the chain is Extracellular. N-linked (GlcNAc...) asparagine glycosylation is found at Asn270, Asn326, Asn357, Asn409, Asn466, Asn493, and Asn513. Residues 542-544 (PLT) and Arg549 contribute to the glycine site. A helical membrane pass occupies residues 586-606 (NTLWILVMVSVHVVALVLYLL). Topologically, residues 607-663 (DRFSPFGRFKLSHSDSNEEKALNLSSAVWFAWGVLLNSGIGEGTPRSFSARVLGMVW) are cytoplasmic. The chain crosses the membrane as a helical span at residues 664–684 (AGFAMIIVASYTANLAAFLVL). Over 685–843 (ERPKTKLSGI…KTPNTLGLKN (159 aa)) the chain is Extracellular. Asn705 is a glycosylation site (N-linked (GlcNAc...) asparagine). Ser715 and Asp759 together coordinate glycine. A helical membrane pass occupies residues 844 to 864 (MAGVFILVGVGIAGGVGLIII). Over 865 to 1004 (EVIYKKHQVK…YTSDVSHLVV (140 aa)) the chain is Cytoplasmic. The tract at residues 980–1004 (TRPQQNILPPRYSPGYTSDVSHLVV) is disordered. Over residues 994–1004 (GYTSDVSHLVV) the composition is skewed to polar residues.

It belongs to the glutamate-gated ion channel (TC 1.A.10.1) family. As to quaternary structure, forms a heteromeric NMDA channel with Nmdar2.

The protein resides in the cell membrane. It localises to the postsynaptic cell membrane. The protein localises to the postsynaptic density. Functionally, NMDA receptor subtype of glutamate-gated ion channels with high calcium permeability and voltage-dependent sensitivity to magnesium. Mediated by glycine. This protein plays a key role in synaptic plasticity, synaptogenesis, excitotoxicity, memory acquisition and learning. It mediates neuronal functions in glutamate neurotransmission. Is involved in the cell surface targeting of NMDA receptors. Plays a role in associative learning and in long-term memory consolidation. This chain is Glutamate [NMDA] receptor subunit 1, found in Drosophila pseudoobscura pseudoobscura (Fruit fly).